The primary structure comprises 235 residues: Ribonuclease PH (235 aa).

Residues Arg86 and 124 to 126 (GTR) each bind phosphate.

The protein belongs to the RNase PH family. Homohexameric ring arranged as a trimer of dimers.

The enzyme catalyses tRNA(n+1) + phosphate = tRNA(n) + a ribonucleoside 5'-diphosphate. Phosphorolytic 3'-5' exoribonuclease that plays an important role in tRNA 3'-end maturation. Removes nucleotide residues following the 3'-CCA terminus of tRNAs; can also add nucleotides to the ends of RNA molecules by using nucleoside diphosphates as substrates, but this may not be physiologically important. Probably plays a role in initiation of 16S rRNA degradation (leading to ribosome degradation) during starvation. The sequence is that of Ribonuclease PH from Legionella pneumophila (strain Corby).